The primary structure comprises 224 residues: Small ribosomal subunit protein uS13 (224 aa).

The span at 1-17 (MSEKTDKTEKKQKKAEE) shows a compositional bias: basic and acidic residues. Disordered stretches follow at residues 1–64 (MSEK…AEEK) and 184–224 (HERG…EDKK). 2 stretches are compositionally biased toward low complexity: residues 20-30 (ETASAEAAPAK) and 38-47 (AKPAEGAPAD). The span at 210–224 (KKGEQGGAAKKEDKK) shows a compositional bias: basic and acidic residues.

Belongs to the universal ribosomal protein uS13 family. In terms of assembly, part of the 30S ribosomal subunit. Forms a loose heterodimer with protein S19. Forms two bridges to the 50S subunit in the 70S ribosome.

Located at the top of the head of the 30S subunit, it contacts several helices of the 16S rRNA. In the 70S ribosome it contacts the 23S rRNA (bridge B1a) and protein L5 of the 50S subunit (bridge B1b), connecting the 2 subunits; these bridges are implicated in subunit movement. The chain is Small ribosomal subunit protein uS13 from Methanocella arvoryzae (strain DSM 22066 / NBRC 105507 / MRE50).